The sequence spans 163 residues: Crossover junction endodeoxyribonuclease RuvC (163 aa).

Active-site residues include aspartate 4, glutamate 65, and aspartate 138. The Mg(2+) site is built by aspartate 4, glutamate 65, and aspartate 138.

This sequence belongs to the RuvC family. Homodimer which binds Holliday junction (HJ) DNA. The HJ becomes 2-fold symmetrical on binding to RuvC with unstacked arms; it has a different conformation from HJ DNA in complex with RuvA. In the full resolvosome a probable DNA-RuvA(4)-RuvB(12)-RuvC(2) complex forms which resolves the HJ. It depends on Mg(2+) as a cofactor.

It is found in the cytoplasm. It carries out the reaction Endonucleolytic cleavage at a junction such as a reciprocal single-stranded crossover between two homologous DNA duplexes (Holliday junction).. In terms of biological role, the RuvA-RuvB-RuvC complex processes Holliday junction (HJ) DNA during genetic recombination and DNA repair. Endonuclease that resolves HJ intermediates. Cleaves cruciform DNA by making single-stranded nicks across the HJ at symmetrical positions within the homologous arms, yielding a 5'-phosphate and a 3'-hydroxyl group; requires a central core of homology in the junction. The consensus cleavage sequence is 5'-(A/T)TT(C/G)-3'. Cleavage occurs on the 3'-side of the TT dinucleotide at the point of strand exchange. HJ branch migration catalyzed by RuvA-RuvB allows RuvC to scan DNA until it finds its consensus sequence, where it cleaves and resolves the cruciform DNA. The chain is Crossover junction endodeoxyribonuclease RuvC from Corynebacterium jeikeium (strain K411).